The chain runs to 500 residues: Cytochrome P450 11B2, mitochondrial (500 aa).

The N-terminal 24 residues, 1–24 (MALRVTADVWLARPWQCLHRTRAL), are a transit peptide targeting the mitochondrion. 21-hydroxyprogesterone is bound at residue F381. Heme is bound at residue C447.

It belongs to the cytochrome P450 family. The cofactor is heme.

The protein resides in the mitochondrion inner membrane. The enzyme catalyses a steroid + 2 reduced [adrenodoxin] + O2 + 2 H(+) = an 11beta-hydroxysteroid + 2 oxidized [adrenodoxin] + H2O. It carries out the reaction 21-hydroxyprogesterone + 2 reduced [adrenodoxin] + O2 + 2 H(+) = corticosterone + 2 oxidized [adrenodoxin] + H2O. The catalysed reaction is corticosterone + 2 reduced [adrenodoxin] + O2 + 2 H(+) = 18-hydroxycorticosterone + 2 oxidized [adrenodoxin] + H2O. It catalyses the reaction 18-hydroxycorticosterone + 2 reduced [adrenodoxin] + O2 + 2 H(+) = aldosterone + 2 oxidized [adrenodoxin] + 2 H2O. The enzyme catalyses 11-deoxycortisol + 2 reduced [adrenodoxin] + O2 + 2 H(+) = cortisol + 2 oxidized [adrenodoxin] + H2O. It carries out the reaction 21-hydroxyprogesterone + 2 reduced [adrenodoxin] + O2 + 2 H(+) = 18-hydroxy-11-deoxycorticosterone + 2 oxidized [adrenodoxin] + H2O. The catalysed reaction is cortisol + 2 reduced [adrenodoxin] + O2 + 2 H(+) = 18-hydroxycortisol + 2 oxidized [adrenodoxin] + H2O. It catalyses the reaction 18-hydroxycortisol + 2 reduced [adrenodoxin] + O2 + 2 H(+) = 18-oxocortisol + 2 oxidized [adrenodoxin] + 2 H2O. It functions in the pathway steroid biosynthesis. In terms of biological role, a cytochrome P450 monooxygenase that catalyzes the biosynthesis of aldosterone, the main mineralocorticoid in the human body responsible for salt and water homeostasis, thus involved in blood pressure regulation, arterial hypertension, and the development of heart failure. Catalyzes three sequential oxidative reactions of 11-deoxycorticosterone (21-hydroxyprogesterone), namely 11-beta hydroxylation, followed by two successive oxidations at C18 yielding 18-hydroxy and then 18-oxo intermediates (that would not leave the enzyme active site during the consecutive hydroxylation reactions), ending with the formation of aldosterone. Can also produce 18-hydroxycortisol and 18-oxocortisol, derived from successive oxidations of cortisol at C18, normally found at very low levels, but significantly increased in primary aldosteronism, the most common form of secondary hypertension. Mechanistically, uses molecular oxygen inserting one oxygen atom into a substrate and reducing the second into a water molecule. Two electrons are provided by NADPH via a two-protein mitochondrial transfer system comprising flavoprotein FDXR (adrenodoxin/ferredoxin reductase) and nonheme iron-sulfur protein FDX1 or FDX2 (adrenodoxin/ferredoxin). Could also be involved in the androgen metabolic pathway. This is Cytochrome P450 11B2, mitochondrial (Cyp11b2) from Mus musculus (Mouse).